A 179-amino-acid chain; its full sequence is Photosystem I assembly protein Ycf3 (179 aa).

TPR repeat units follow at residues 29 to 62 (AFSY…EEDP), 66 to 99 (SYTL…NSNL), and 126 to 159 (NLEI…APDN).

Belongs to the Ycf3 family.

Its subcellular location is the plastid. The protein resides in the chloroplast thylakoid membrane. Essential for the assembly of the photosystem I (PSI) complex. May act as a chaperone-like factor to guide the assembly of the PSI subunits. The sequence is that of Photosystem I assembly protein Ycf3 from Trieres chinensis (Marine centric diatom).